The chain runs to 1036 residues: KAT8 regulatory NSL complex subunit 1 (1036 aa).

The residue at position 104 (Lys-104) is an N6-acetyllysine. Disordered stretches follow at residues 145-211 (GQTA…CTLP) and 226-257 (NSTANKSSVNSMDQPALQGSSRLSPSTDSSSN). Polar residues predominate over residues 226-244 (NSTANKSSVNSMDQPALQG). A compositionally biased stretch (low complexity) spans 245 to 256 (SSRLSPSTDSSS). Ser-249 carries the phosphoserine modification. Residue Lys-262 forms a Glycyl lysine isopeptide (Lys-Gly) (interchain with G-Cter in SUMO2) linkage. Ser-268 is modified (phosphoserine). A coiled-coil region spans residues 285–312 (TALLRRQADIEIRARRLQKRLQVVQAKQ). Lys-331 participates in a covalent cross-link: Glycyl lysine isopeptide (Lys-Gly) (interchain with G-Cter in SUMO2). Disordered stretches follow at residues 399-423 (DSDVTDSSSGGESDIEEEELTRADP) and 739-787 (SPSY…RRRG). The segment covering 759–772 (STSSDTSTPTSSGS) has biased composition (low complexity). Positions 781–813 (PVRRRRGESSFDINNIVIPMSVAATTRVEKLQY) are required for activation of KAT8 histone acetyltransferase activity. The PEHE domain maps to 815 to 966 (EILTPSWREV…GLDEQSVQPW (152 aa)). The segment at 841-859 (EDLSDAAFAALHAKCEEME) is interaction with KAT8 HAT domain. A disordered region spans residues 869–931 (VPPQRRGSRS…SPISPELHSA (63 aa)). The segment covering 886-896 (TTPQLGSANPS) has biased composition (polar residues). A compositionally biased stretch (low complexity) spans 906 to 919 (SSSHSLSEFSHGQS). Ser-922 and Ser-925 each carry phosphoserine. Residue Thr-934 is modified to Phosphothreonine. Residue Ser-976 is modified to Phosphoserine. The segment at 989 to 1020 (DTAARCTRRTSGSKTGREAEVAPTSPPVVPLK) is disordered.

In terms of assembly, component of the NSL complex at least composed of MOF/KAT8, KANSL1, KANSL2, KANSL3, MCRS1, PHF20, OGT1/OGT, WDR5 and HCFC1. Interacts (via PEHE domain) with KAT8 (via HAT domain); the interaction is direct. Component of some MLL1/MLL complex, at least composed of the core components KMT2A/MLL1, ASH2L, HCFC1, WDR5 and RBBP5, as well as the facultative components BACC1, CHD8, E2F6, HSP70, INO80C, KANSL1, LAS1L, MAX, MCRS1, MGA, KAT8/MOF, PELP1, PHF20, PRP31, RING2, RUVB1/TIP49A, RUVB2/TIP49B, SENP3, TAF1, TAF4, TAF6, TAF7, TAF9 and TEX10.

It localises to the nucleus. The protein resides in the chromosome. The protein localises to the centromere. Its subcellular location is the kinetochore. It is found in the mitochondrion. It localises to the cytoplasm. The protein resides in the cytoskeleton. The protein localises to the spindle pole. Non-catalytic component of the NSL histone acetyltransferase complex, a multiprotein complex that mediates histone H4 acetylation at 'Lys-5'- and 'Lys-8' (H4K5ac and H4K8ac) at transcription start sites and promotes transcription initiation. The NSL complex also acts as a regulator of gene expression in mitochondria. In addition to its role in transcription, KANSL1 also plays an essential role in spindle assembly during mitosis. Associates with microtubule ends and contributes to microtubule stability. The protein is KAT8 regulatory NSL complex subunit 1 (Kansl1) of Mus musculus (Mouse).